Consider the following 330-residue polypeptide: Diacylglycerol acyltransferase/mycolyltransferase Ag85B (330 aa).

The first 40 residues, 1 to 40, serve as a signal peptide directing secretion; sequence MTDLSKKVRAWGRRLLVGTAAAVTLPGLIGLAGGAPTAGA. 82–83 contributes to the substrate binding site; the sequence is LR. The segment at 98 to 108 is fibronectin-binding; the sequence is FEWYYQSGLSI. An intrachain disulfide couples cysteine 127 to cysteine 132. Residues serine 166 and aspartate 194 each coordinate substrate. Serine 166 functions as the Nucleophile in the catalytic mechanism. Residue glutamate 270 is part of the active site. Substrate is bound by residues 272 to 275, lysine 279, and 302 to 304; these read FVRS and HSW. Residue histidine 302 is part of the active site.

This sequence belongs to the mycobacterial A85 antigen family.

It is found in the secreted. The enzyme catalyses 2 alpha,alpha'-trehalose 6-mycolate = alpha,alpha'-trehalose 6,6'-bismycolate + alpha,alpha-trehalose. It catalyses the reaction an acyl-CoA + a 1,2-diacyl-sn-glycerol = a triacyl-sn-glycerol + CoA. In terms of biological role, the antigen 85 proteins (FbpA, FbpB, FbpC) are responsible for the high affinity of mycobacteria for fibronectin, a large adhesive glycoprotein, which facilitates the attachment of M.tuberculosis to murine alveolar macrophages (AMs). They also help to maintain the integrity of the cell wall by catalyzing the transfer of mycolic acids to cell wall arabinogalactan and through the synthesis of alpha,alpha-trehalose dimycolate (TDM, cord factor). They catalyze the transfer of a mycoloyl residue from one molecule of alpha,alpha-trehalose monomycolate (TMM) to another TMM, leading to the formation of TDM. The protein is Diacylglycerol acyltransferase/mycolyltransferase Ag85B (fbpB) of Mycobacterium scrofulaceum.